Here is a 233-residue protein sequence, read N- to C-terminus: Small ribosomal subunit protein uS5 (233 aa).

2 stretches are compositionally biased toward basic and acidic residues: residues 1-12 (MANESEIQKTEN) and 39-54 (RGRD…RNEE). Residues 1–54 (MANESEIQKTENAEVANAANGTNPNNERRGRGGRGRGGRGRDGRGRRDDRRNEE) are disordered. The S5 DRBM domain occupies 59 to 122 (LIEKLVHINR…AAAKKTMIRV (64 aa)).

This sequence belongs to the universal ribosomal protein uS5 family. As to quaternary structure, part of the 30S ribosomal subunit. Contacts proteins S4 and S8.

Its function is as follows. With S4 and S12 plays an important role in translational accuracy. Functionally, located at the back of the 30S subunit body where it stabilizes the conformation of the head with respect to the body. This is Small ribosomal subunit protein uS5 from Zymomonas mobilis subsp. mobilis (strain ATCC 31821 / ZM4 / CP4).